The following is a 74-amino-acid chain: Putative defensin-like protein 36 (74 aa).

Residues methionine 1–cysteine 22 form the signal peptide. Cystine bridges form between cysteine 33–cysteine 59, cysteine 45–cysteine 69, and cysteine 49–cysteine 71.

The protein belongs to the DEFL family.

It localises to the secreted. The protein is Putative defensin-like protein 36 of Arabidopsis thaliana (Mouse-ear cress).